The sequence spans 207 residues: Dephospho-CoA kinase (207 aa).

Residues 4-204 (VVGLTGGIGS…HLYLQFAEIF (201 aa)) form the DPCK domain. 12–17 (GSGKST) contacts ATP.

This sequence belongs to the CoaE family.

It localises to the cytoplasm. The catalysed reaction is 3'-dephospho-CoA + ATP = ADP + CoA + H(+). It functions in the pathway cofactor biosynthesis; coenzyme A biosynthesis; CoA from (R)-pantothenate: step 5/5. Its function is as follows. Catalyzes the phosphorylation of the 3'-hydroxyl group of dephosphocoenzyme A to form coenzyme A. The protein is Dephospho-CoA kinase of Aggregatibacter actinomycetemcomitans (Actinobacillus actinomycetemcomitans).